We begin with the raw amino-acid sequence, 91 residues long: Uteroglobin (91 aa).

Residues 1 to 21 form the signal peptide; sequence MKLAITITLAILALCCSPASA.

It belongs to the secretoglobin family. Antiparallel homodimer; disulfide-linked. Interaction with LMBR1L is controversial. As to expression, club cells (nonciliated cells of the surface epithelium of the pulmonary airways). Expressed in lung, uterus, and prostate.

It localises to the secreted. Binds phosphatidylcholine, phosphatidylinositol, polychlorinated biphenyls (PCB) and weakly progesterone, potent inhibitor of phospholipase A2. This Equus caballus (Horse) protein is Uteroglobin (SCGB1A1).